A 950-amino-acid polypeptide reads, in one-letter code: 2-oxoglutarate dehydrogenase E1 component (950 aa).

The protein belongs to the alpha-ketoglutarate dehydrogenase family. Homodimer. Part of the 2-oxoglutarate dehydrogenase (OGDH) complex composed of E1 (2-oxoglutarate dehydrogenase), E2 (dihydrolipoamide succinyltransferase) and E3 (dihydrolipoamide dehydrogenase); the complex contains multiple copies of the three enzymatic components (E1, E2 and E3). Thiamine diphosphate serves as cofactor.

The catalysed reaction is N(6)-[(R)-lipoyl]-L-lysyl-[protein] + 2-oxoglutarate + H(+) = N(6)-[(R)-S(8)-succinyldihydrolipoyl]-L-lysyl-[protein] + CO2. Functionally, E1 component of the 2-oxoglutarate dehydrogenase (OGDH) complex which catalyzes the decarboxylation of 2-oxoglutarate, the first step in the conversion of 2-oxoglutarate to succinyl-CoA and CO(2). In Geobacillus kaustophilus (strain HTA426), this protein is 2-oxoglutarate dehydrogenase E1 component.